The primary structure comprises 777 residues: Ribosome biogenesis protein ERB1 (777 aa).

A disordered region spans residues 1–122 (MAPTAPAKKR…RPNYRVVEDA (122 aa)). The span at 36 to 67 (SEDDSDFVASGDEDEEDEDEDEDEDKDEDDEH) shows a compositional bias: acidic residues. WD repeat units follow at residues 430-469 (GHEGRVRSSAIDPTGLWLATGGDDGYVRIWLINPARQVWA), 473-513 (SSDE…PEVE), 562-604 (TVRS…SQIP), 606-645 (RKLSGLAQVAHFHPSRPLFFVATQRTIRCYDLQRLELVKV), 648-687 (PGARWISSFDIHPGGDNLIVGSYDRRLLWHDLDLSTRPYK), 691-731 (FHPQ…DLME), and 747-777 (VDSLGVMDVDWHPSEPWCISAGADGTCRLWM).

It belongs to the WD repeat BOP1/ERB1 family. In terms of assembly, component of the NOP7 complex, composed of ERB1, NOP7 and YTM1. The complex is held together by ERB1, which interacts with NOP7 via its N-terminal domain and with YTM1 via a high-affinity interaction between the seven-bladed beta-propeller domains of the 2 proteins. The NOP7 complex associates with the 66S pre-ribosome.

The protein resides in the nucleus. The protein localises to the nucleolus. It localises to the nucleoplasm. Its function is as follows. Component of the NOP7 complex, which is required for maturation of the 25S and 5.8S ribosomal RNAs and formation of the 60S ribosome. This chain is Ribosome biogenesis protein ERB1, found in Pyricularia oryzae (strain 70-15 / ATCC MYA-4617 / FGSC 8958) (Rice blast fungus).